The following is a 284-amino-acid chain: D-tagatose-1,6-bisphosphate aldolase subunit GatY (284 aa).

Catalysis depends on aspartate 82, which acts as the Proton donor. Residues histidine 83 and histidine 180 each contribute to the Zn(2+) site. Glycine 181 is a binding site for dihydroxyacetone phosphate. Histidine 208 provides a ligand contact to Zn(2+). Dihydroxyacetone phosphate-binding positions include 209–211 (GAS) and 230–233 (NVAT).

Belongs to the class II fructose-bisphosphate aldolase family. TagBP aldolase GatY subfamily. In terms of assembly, forms a complex with GatZ. Zn(2+) serves as cofactor.

It catalyses the reaction D-tagatofuranose 1,6-bisphosphate = D-glyceraldehyde 3-phosphate + dihydroxyacetone phosphate. It participates in carbohydrate metabolism; D-tagatose 6-phosphate degradation; D-glyceraldehyde 3-phosphate and glycerone phosphate from D-tagatose 6-phosphate: step 2/2. Catalytic subunit of the tagatose-1,6-bisphosphate aldolase GatYZ, which catalyzes the reversible aldol condensation of dihydroxyacetone phosphate (DHAP or glycerone-phosphate) with glyceraldehyde 3-phosphate (G3P) to produce tagatose 1,6-bisphosphate (TBP). Requires GatZ subunit for full activity and stability. Is involved in the catabolism of galactitol. This is D-tagatose-1,6-bisphosphate aldolase subunit GatY from Salmonella typhi.